The primary structure comprises 286 residues: 33 kDa chaperonin (286 aa).

2 cysteine pairs are disulfide-bonded: cysteine 225–cysteine 227 and cysteine 258–cysteine 261.

This sequence belongs to the HSP33 family. Post-translationally, under oxidizing conditions two disulfide bonds are formed involving the reactive cysteines. Under reducing conditions zinc is bound to the reactive cysteines and the protein is inactive.

The protein localises to the cytoplasm. Functionally, redox regulated molecular chaperone. Protects both thermally unfolding and oxidatively damaged proteins from irreversible aggregation. Plays an important role in the bacterial defense system toward oxidative stress. In Shewanella baltica (strain OS223), this protein is 33 kDa chaperonin.